A 291-amino-acid polypeptide reads, in one-letter code: Formamidopyrimidine-DNA glycosylase (291 aa).

Pro2 functions as the Schiff-base intermediate with DNA in the catalytic mechanism. The Proton donor role is filled by Glu3. The active-site Proton donor; for beta-elimination activity is the Lys58. Residues His104, Arg123, and Lys166 each coordinate DNA. Residues 257-291 form an FPG-type zinc finger; the sequence is KVYDREGEPCPTCGGTVQRFVQNGRSTFWCPKCQK. Arg281 serves as the catalytic Proton donor; for delta-elimination activity.

This sequence belongs to the FPG family. In terms of assembly, monomer. Requires Zn(2+) as cofactor.

It carries out the reaction Hydrolysis of DNA containing ring-opened 7-methylguanine residues, releasing 2,6-diamino-4-hydroxy-5-(N-methyl)formamidopyrimidine.. The enzyme catalyses 2'-deoxyribonucleotide-(2'-deoxyribose 5'-phosphate)-2'-deoxyribonucleotide-DNA = a 3'-end 2'-deoxyribonucleotide-(2,3-dehydro-2,3-deoxyribose 5'-phosphate)-DNA + a 5'-end 5'-phospho-2'-deoxyribonucleoside-DNA + H(+). Its function is as follows. Involved in base excision repair of DNA damaged by oxidation or by mutagenic agents. Acts as a DNA glycosylase that recognizes and removes damaged bases. Has a preference for oxidized purines, such as 7,8-dihydro-8-oxoguanine (8-oxoG). Has AP (apurinic/apyrimidinic) lyase activity and introduces nicks in the DNA strand. Cleaves the DNA backbone by beta-delta elimination to generate a single-strand break at the site of the removed base with both 3'- and 5'-phosphates. This chain is Formamidopyrimidine-DNA glycosylase, found in Rhodopseudomonas palustris (strain ATCC BAA-98 / CGA009).